Reading from the N-terminus, the 171-residue chain is Co-chaperone protein HscB (171 aa).

A J domain is found at 2 to 74; the sequence is DYFTLFGLPA…LMRAEYLLSL (73 aa).

The protein belongs to the HscB family. In terms of assembly, interacts with HscA and stimulates its ATPase activity. Interacts with IscU.

Its function is as follows. Co-chaperone involved in the maturation of iron-sulfur cluster-containing proteins. Seems to help targeting proteins to be folded toward HscA. The sequence is that of Co-chaperone protein HscB from Escherichia coli (strain SMS-3-5 / SECEC).